A 569-amino-acid chain; its full sequence is Potassium-transporting ATPase potassium-binding subunit (569 aa).

The next 10 helical transmembrane spans lie at 5–25 (GWAE…PLGV), 65–85 (GYAG…YAVL), 135–155 (LVLT…AAAL), 179–199 (LYVL…LGLP), 254–274 (LTNL…FFAF), 286–306 (ALVI…YWTE), 383–403 (GIAV…LMVG), 422–442 (LLTV…AAVL), 489–509 (MGVA…AMAG), and 528–548 (GGLF…LQFF).

It belongs to the KdpA family. The system is composed of three essential subunits: KdpA, KdpB and KdpC.

It is found in the cell inner membrane. Its function is as follows. Part of the high-affinity ATP-driven potassium transport (or Kdp) system, which catalyzes the hydrolysis of ATP coupled with the electrogenic transport of potassium into the cytoplasm. This subunit binds the periplasmic potassium ions and delivers the ions to the membrane domain of KdpB through an intramembrane tunnel. In Caulobacter sp. (strain K31), this protein is Potassium-transporting ATPase potassium-binding subunit.